A 103-amino-acid chain; its full sequence is Large ribosomal subunit protein bL21 (103 aa).

This sequence belongs to the bacterial ribosomal protein bL21 family. In terms of assembly, part of the 50S ribosomal subunit. Contacts protein L20.

This protein binds to 23S rRNA in the presence of protein L20. This chain is Large ribosomal subunit protein bL21, found in Enterobacter sp. (strain 638).